The chain runs to 968 residues: Isoleucine--tRNA ligase (968 aa).

Residues 68 to 78 (PYANGALHMGH) carry the 'HIGH' region motif. Glu584 lines the L-isoleucyl-5'-AMP pocket. A 'KMSKS' region motif is present at residues 625–629 (KMSKS). Lys628 is an ATP binding site. Positions 938, 941, 958, and 961 each coordinate Zn(2+).

This sequence belongs to the class-I aminoacyl-tRNA synthetase family. IleS type 1 subfamily. In terms of assembly, monomer. Zn(2+) serves as cofactor.

Its subcellular location is the cytoplasm. The enzyme catalyses tRNA(Ile) + L-isoleucine + ATP = L-isoleucyl-tRNA(Ile) + AMP + diphosphate. Catalyzes the attachment of isoleucine to tRNA(Ile). As IleRS can inadvertently accommodate and process structurally similar amino acids such as valine, to avoid such errors it has two additional distinct tRNA(Ile)-dependent editing activities. One activity is designated as 'pretransfer' editing and involves the hydrolysis of activated Val-AMP. The other activity is designated 'posttransfer' editing and involves deacylation of mischarged Val-tRNA(Ile). This Prochlorococcus marinus (strain MIT 9313) protein is Isoleucine--tRNA ligase.